A 267-amino-acid chain; its full sequence is Strigolactone esterase D14 (267 aa).

S97 functions as the Nucleophile in the catalytic mechanism. Residues D218 and H247 contribute to the active site.

It belongs to the AB hydrolase superfamily. As to quaternary structure, interacts with SMXL6, SMXL7 and SMXL8. The interaction with SMXLs occurs in the presence of (2'R) stereoisomers of strigolactones, but not (2'S) stereoisomers. Interacts with MAX2. Forms a complex with MAX2 and SKP1A/ASK1 in presence of strigolactone. Expressed at high levels in rosette and cauline leaves and at lower levels in axillary buds, inflorescences, stems, roots and developing vascular tissue of cotyledons.

It localises to the cytoplasm. The protein resides in the nucleus. In terms of biological role, involved in strigolactone signaling pathway. Does not move long distances acropetally in the plant to regulate shoot branching and is rapidly degraded in the presence of strigolactones. Functions downstream of strigolactone synthesis, as a component of hormone signaling and as an enzyme that participates in the conversion of strigolactones to the bioactive form. Acts probably as a strigolactone receptor. Strigolactones are hormones that inhibit tillering and shoot branching through the MAX-dependent pathway, contribute to the regulation of shoot architectural response to phosphate-limiting conditions and function as rhizosphere signal that stimulates hyphal branching of arbuscular mycorrhizal fungi and trigger seed germination of root parasitic weeds. Hydrolyzes methyl carlactonoate (MeCLA), but not carlactone (CL) or carlactonoic acid (CLA). Hydrolyzes the butenolide ring of strigolactones. The initial nucleophilic attack causes an electron shift, followed by the addition of a water molecule, to lead to the release of the ABC ring product and the formation of a 'Ser-97'-stabilized open lactone intermediate. Has no esterase activity for 4-nitrophenyl butyrate. Binds and hydrolyzes the synthetic strigolactone analog GR24 in vitro. Forms a stable covalent complex with the D-ring of strigolactone, which is essential for hormone bioactivity. The D-ring is attached to His-247 of the catalytic triad. The hydrolysis of strigolactone into a covalently linked intermediate molecule initiates a conformational change of D14 to facilitate interaction with MAX2 and formation of the D14-MAX2-SKP1/ASK1 complex to trigger strigolactone signaling. This mechanism defines D14 as a non-canonical hormone receptor with dual functions to generate and sense the active form of strigolactone. The polypeptide is Strigolactone esterase D14 (Arabidopsis thaliana (Mouse-ear cress)).